A 392-amino-acid polypeptide reads, in one-letter code: MPYRAELKRPDLKGSFPCSICQKVFCHSSSLSRHRMQAHFKSYTCTTCNNEIPSNDTLRSHMYRVHNITRMFMCRCCNWAFPDKTSLHIHMQSMLKNGTPGEAAVLAKSSDVVDSTSESGSPRQSPPFSPDLLMQKRMLQVAANNNNIGSIFPTLLKSPDSKSMFPLDLSNMGPSQFLSAWLANNPINTAALNLAAQQTPSKDSIQSSNISDYDDLEVQTTEEDIKFEVESSDVSPRSVIVKTEPTFKRELEHDADIDVEGDDGEPPLKMTIDDKNIHISHDQPSPTVSDSHISGGSSSHSGESLKCFDCQVARGKLVAVEDKCRAYEKTIRELQVQVDFLRKIQPNPMPPVMLPPPMMPMPSPGPNNLFQNPAMRMLLNNLIHMNRPSVVP.

2 C2H2-type zinc fingers span residues 16 to 39 (FPCSICQKVFCHSSSLSRHRMQAH) and 43 to 66 (YTCTTCNNEIPSNDTLRSHMYRVH). The C2H2-type 3; degenerate zinc finger occupies 72–95 (FMCRCCNWAFPDKTSLHIHMQSML). Disordered stretches follow at residues 106 to 130 (LAKSSDVVDSTSESGSPRQSPPFSP) and 278 to 303 (HISHDQPSPTVSDSHISGGSSSHSGE). Polar residues predominate over residues 112 to 123 (VVDSTSESGSPR). Residues 289-303 (SDSHISGGSSSHSGE) show a composition bias toward low complexity.

It localises to the nucleus. In terms of biological role, probable transcription factor that acts downstream of egl-15, to promote migration of the HSN motor neurons from the tail to the gonad primordium during HSN cell differentiation. The chain is Zinc finger protein ham-2 from Caenorhabditis elegans.